The primary structure comprises 389 residues: Trans-2-enoyl-CoA reductase [NADH] (389 aa).

NAD(+) is bound by residues Gly47 to Tyr52, Phe73 to Glu74, Asp110 to Ala111, and Leu138 to Ala139. Substrate is bound at residue Tyr224. Catalysis depends on Tyr234, which acts as the Proton donor. NAD(+)-binding positions include Lys243 and Leu272–Thr274.

It belongs to the TER reductase family. Monomer.

The enzyme catalyses a 2,3-saturated acyl-CoA + NAD(+) = a (2E)-enoyl-CoA + NADH + H(+). Its pathway is lipid metabolism; fatty acid biosynthesis. Its function is as follows. Involved in the fatty acid synthesis (FAS II). Catalyzes the reduction of a carbon-carbon double bond in an enoyl moiety that is covalently linked to a coenzyme A (CoA). This Clostridium perfringens (strain 13 / Type A) protein is Trans-2-enoyl-CoA reductase [NADH].